The primary structure comprises 357 residues: Peptide chain release factor 1 (357 aa).

Q236 carries the N5-methylglutamine modification.

It belongs to the prokaryotic/mitochondrial release factor family. Methylated by PrmC. Methylation increases the termination efficiency of RF1.

It is found in the cytoplasm. Functionally, peptide chain release factor 1 directs the termination of translation in response to the peptide chain termination codons UAG and UAA. The protein is Peptide chain release factor 1 (prfA) of Mycobacterium bovis (strain ATCC BAA-935 / AF2122/97).